A 294-amino-acid chain; its full sequence is Glucosamine kinase GspK (294 aa).

Position 12 (T12) interacts with ATP. Residue D101 coordinates substrate. ATP is bound at residue T122. Residues 139–141 (GRE) and D146 contribute to the substrate site. G202 is an ATP binding site.

It belongs to the eukaryotic-type N-acetylglucosamine kinase family.

The protein resides in the cytoplasm. The catalysed reaction is D-glucosamine + ATP = D-glucosamine 6-phosphate + ADP + H(+). In terms of biological role, ATP-dependent kinase, which is specific for glucosamine. Does not show kinase activity with any other sugar. The chain is Glucosamine kinase GspK (gspK) from Vibrio cholerae serotype O1 (strain ATCC 39315 / El Tor Inaba N16961).